Consider the following 832-residue polypeptide: Histone acetyltransferase KAT2B (832 aa).

Positions 1–22 (MSEAGGAGPGGCGAGAGAGAGP) are enriched in gly residues. 2 disordered regions span residues 1–54 (MSEA…ACGP) and 395–436 (SYNS…DSHV). The span at 24 to 39 (ALPPQPAALPPAPPQG) shows a compositional bias: pro residues. Residues 40–54 (SPCAAAAGGSGACGP) show a composition bias toward low complexity. Polar residues predominate over residues 395-413 (SYNSTSSSLEQPNAGSSSP). The segment covering 425 to 436 (PGEKRKMTDSHV) has biased composition (basic and acidic residues). One can recognise an N-acetyltransferase domain in the interval 503–651 (LNQKPNKKIL…GATLMGCELN (149 aa)). Glu570 functions as the Proton donor/acceptor in the catalytic mechanism. Acetyl-CoA contacts are provided by residues 574–576 (CAV), 581–587 (QVKGYGT), and 612–615 (YAIG). Residues 706–725 (IRETGWKPSGKEKSKEPRDP) are disordered. A compositionally biased stretch (basic and acidic residues) spans 714–725 (SGKEKSKEPRDP). Residues 723–827 (RDPDQLYSTL…KFFFSKIKEA (105 aa)) enclose the Bromo domain.

Belongs to the acetyltransferase family. GCN5 subfamily. In terms of assembly, interacts with SIRT1. Interacts (unsumoylated form) with NR2C1; the interaction promotes transactivation activity. Interacts with EP300, CREBBP and DDX17. Interacts with NCOA1 and NCOA3. Component of a large chromatin remodeling complex, at least composed of MYSM1, KAT2B/PCAF, RBM10 and KIF11/TRIP5. Interacts with NR2C2 (hypophosphorylated and unsumoylated form); the interaction promotes the transactivation activity of NR2C2. Interacts with KLF1; the interaction does not acetylate KLF1 and there is no enhancement of its transactivational activity. Interacts with NFE4. Interacts with MECOM. Interacts with E2F1; the interaction acetylates E2F1 augmenting its DNA-binding and transcriptional activity. Interacts with NPAS2, BMAL1 and CLOCK. Interacts with BCAS3. Interacts with CEBPB. Interacts with NR4A3. Interacts with NFATC2. Interacts with TBX5. Interacts with PLK4. Interacts with RB1; this interaction leads to RB1 acetylation. Interacts with VRK1. As to quaternary structure, (Microbial infection) Interacts with and acetylates HIV-1 Tat. (Microbial infection) Interacts with HTLV-1 Tax. In terms of tissue distribution, ubiquitously expressed but most abundant in heart and skeletal muscle. Also expressed in the skin, in keratinocytes (at protein level).

It is found in the nucleus. The protein localises to the cytoplasm. The protein resides in the cytoskeleton. Its subcellular location is the microtubule organizing center. It localises to the centrosome. The enzyme catalyses L-lysyl-[histone] + acetyl-CoA = N(6)-acetyl-L-lysyl-[histone] + CoA + H(+). It catalyses the reaction L-lysyl-[protein] + acetyl-CoA = N(6)-acetyl-L-lysyl-[protein] + CoA + H(+). The catalysed reaction is spermidine + acetyl-CoA = N(8)-acetylspermidine + CoA + H(+). With respect to regulation, activated in vitro by very low concentrations of spermidine, but inhibited at spermidine concentrations higher than 4 uM. The activating effect of low spermidine concentrations may be mediated by N(8)-acetylspermidine produced by KAT2B/P/CAF itself acting as a positive feedback loop. Functionally, functions as a histone acetyltransferase (HAT) to promote transcriptional activation. Has significant histone acetyltransferase activity with core histones (H3 and H4), and also with nucleosome core particles. Has a a strong preference for acetylation of H3 at 'Lys-9' (H3K9ac). Also acetylates non-histone proteins, such as ACLY, MAPRE1/EB1, PLK4, RRP9/U3-55K and TBX5. Inhibits cell-cycle progression and counteracts the mitogenic activity of the adenoviral oncoprotein E1A. Acts as a circadian transcriptional coactivator which enhances the activity of the circadian transcriptional activators: NPAS2-BMAL1 and CLOCK-BMAL1 heterodimers. Involved in heart and limb development by mediating acetylation of TBX5, acetylation regulating nucleocytoplasmic shuttling of TBX5. Acts as a negative regulator of centrosome amplification by mediating acetylation of PLK4. Acetylates RRP9/U3-55K, a core subunit of the U3 snoRNP complex, impairing pre-rRNA processing. Acetylates MAPRE1/EB1, promoting dynamic kinetochore-microtubule interactions in early mitosis. Also acetylates spermidine. Its function is as follows. (Microbial infection) In case of HIV-1 infection, it is recruited by the viral protein Tat. Regulates Tat's transactivating activity and may help inducing chromatin remodeling of proviral genes. The protein is Histone acetyltransferase KAT2B of Homo sapiens (Human).